Reading from the N-terminus, the 131-residue chain is Fumarate reductase subunit C (131 aa).

Transmembrane regions (helical) follow at residues 30 to 50 (EGTA…LFAL), 63 to 83 (FLQN…ALLH), and 109 to 129 (IIKS…FVAL).

It belongs to the FrdC family. As to quaternary structure, part of an enzyme complex containing four subunits: a flavoprotein (FrdA), an iron-sulfur protein (FrdB), and two hydrophobic anchor proteins (FrdC and FrdD).

Its subcellular location is the cell inner membrane. Its function is as follows. Two distinct, membrane-bound, FAD-containing enzymes are responsible for the catalysis of fumarate and succinate interconversion; fumarate reductase is used in anaerobic growth, and succinate dehydrogenase is used in aerobic growth. Anchors the catalytic components of the fumarate reductase complex to the cell inner membrane, binds quinones. The protein is Fumarate reductase subunit C of Shigella boydii serotype 4 (strain Sb227).